Here is a 198-residue protein sequence, read N- to C-terminus: Transcription factor BHLH133 (198 aa).

The tract at residues 114-127 is basic motif; degenerate; it reads SAESSQSYYAKNRR. A bHLH domain is found at 114–163; it reads SAESSQSYYAKNRRQRINERLRILQELIPNGTKVDISTMLEEAIQYVKFL. The segment at 128-163 is helix-loop-helix motif; the sequence is QRINERLRILQELIPNGTKVDISTMLEEAIQYVKFL.

The protein belongs to the bHLH protein family.

It localises to the nucleus. Functionally, transcription factor that acts as a regulator of iron homeostasis. May act as negative regulator of iron transportation from root to shoot. Does not seem to be involved in the suppression of the induction of iron deficiency responsive genes. The sequence is that of Transcription factor BHLH133 from Oryza sativa subsp. japonica (Rice).